A 63-amino-acid chain; its full sequence is Transmembrane protein ZNF593OS (63 aa).

Residues 30 to 50 (LAGVVATVLAVLGLGGSCYAV) form a helical membrane-spanning segment.

Its subcellular location is the membrane. The sequence is that of Transmembrane protein ZNF593OS from Homo sapiens (Human).